The primary structure comprises 446 residues: Anthranilate N-benzoyltransferase protein 2 (446 aa).

Catalysis depends on proton acceptor residues His-164 and Asp-393.

It belongs to the plant acyltransferase family. N-terminus is blocked.

The enzyme catalyses anthranilate + benzoyl-CoA = N-benzoylanthranilate + CoA. It functions in the pathway phytoalexin biosynthesis; methoxydianthramide B biosynthesis. Its function is as follows. Catalyzes the formation of N-benzoylanthranilate, in the course of methoxydianthramide B, a phytoalexin. Phytoalexins are produced in response to infection by parasites, and are essential for the expression of disease resistance. This Dianthus caryophyllus (Carnation) protein is Anthranilate N-benzoyltransferase protein 2 (HCBT2).